The primary structure comprises 298 residues: 4-hydroxy-tetrahydrodipicolinate synthase (298 aa).

A pyruvate-binding site is contributed by Thr51. Tyr139 acts as the Proton donor/acceptor in catalysis. Residue Lys167 is the Schiff-base intermediate with substrate of the active site. Ile209 is a binding site for pyruvate.

This sequence belongs to the DapA family. Homotetramer; dimer of dimers.

It is found in the cytoplasm. The catalysed reaction is L-aspartate 4-semialdehyde + pyruvate = (2S,4S)-4-hydroxy-2,3,4,5-tetrahydrodipicolinate + H2O + H(+). It functions in the pathway amino-acid biosynthesis; L-lysine biosynthesis via DAP pathway; (S)-tetrahydrodipicolinate from L-aspartate: step 3/4. In terms of biological role, catalyzes the condensation of (S)-aspartate-beta-semialdehyde [(S)-ASA] and pyruvate to 4-hydroxy-tetrahydrodipicolinate (HTPA). The sequence is that of 4-hydroxy-tetrahydrodipicolinate synthase from Haemophilus influenzae (strain ATCC 51907 / DSM 11121 / KW20 / Rd).